We begin with the raw amino-acid sequence, 156 residues long: uncharacterized protein (156 aa).

5 helical membrane-spanning segments follow: residues 7-29 (AQIS…SYFL), 42-64 (YFAL…PYLF), 69-88 (AVTG…AITS), 98-120 (AAIW…YPAL), and 133-155 (ALVL…ISRI).

It is found in the cell membrane. This is an uncharacterized protein from Pasteurella multocida (strain Pm70).